The following is a 365-amino-acid chain: S-adenosylmethionine:tRNA ribosyltransferase-isomerase (365 aa).

This sequence belongs to the QueA family. In terms of assembly, monomer.

It is found in the cytoplasm. It catalyses the reaction 7-aminomethyl-7-carbaguanosine(34) in tRNA + S-adenosyl-L-methionine = epoxyqueuosine(34) in tRNA + adenine + L-methionine + 2 H(+). Its pathway is tRNA modification; tRNA-queuosine biosynthesis. Functionally, transfers and isomerizes the ribose moiety from AdoMet to the 7-aminomethyl group of 7-deazaguanine (preQ1-tRNA) to give epoxyqueuosine (oQ-tRNA). The polypeptide is S-adenosylmethionine:tRNA ribosyltransferase-isomerase (Helicobacter hepaticus (strain ATCC 51449 / 3B1)).